A 384-amino-acid chain; its full sequence is Isoafricanol synthase (384 aa).

Mg(2+) contacts are provided by Asp-95, Asn-245, Ser-249, and Glu-253.

Belongs to the terpene synthase family. Requires Mg(2+) as cofactor.

It carries out the reaction (2E,6E)-farnesyl diphosphate + H2O = (+)-isoafricanol + diphosphate. Catalyzes the cyclization of farnesyl diphosphate (FPP) to isoafricanol. The protein is Isoafricanol synthase of Streptomyces violaceusniger (strain Tu 4113).